Reading from the N-terminus, the 492-residue chain is MSIEIIISLGIYFIAMLLIGWYAFKKTTDINDYMLGGRGLGPFVTALSAGAADMSGWMLMGVPGAMFATGLSTLWLALGLTIGAYSNYLLLAPRLRAYTEAADDAITIPDFFDKRFQHSSSLLKIVSALIIMIFFTLYTSSGMVSGGRLFESAFGADYKLGLFLTTAVVVLYTLFGGFLAVSLTDFVQGAIMFAALVLVPIVAFTHVGGVAPTFHEIDAVNPHLLDIFKGASVISIISYLAWGLGYYGQPHIIVRFMAIKDIKDLKPARRIGMSWMIITVLGSVLTGLIGVAYAHKFGVAVKDPEMIFIIFSKILFHPLITGFLLSAILAAIMSSISSQLLVTASAVTEDLYRSFFRRKASDKELVMIGRLSVLVIAVIAVLLSLNPNSTILDLVGYAWAGFGSAFGPAILLSLYWKRMNEWGALAAMIVGAATVLIWITTGLAKSTGVYEIIPGFILSMIAGIIVSMITKRPAKASYRLFGVMEKLLKRKK.

The next 13 membrane-spanning stretches (helical) occupy residues 3-23, 40-60, 62-82, 125-145, 161-181, 190-210, 224-244, 271-291, 314-334, 365-385, 394-414, 424-444, and 449-469; these read IEIIISLGIYFIAMLLIGWYA, LGPFVTALSAGAADMSGWMLM, VPGAMFATGLSTLWLALGLTI, IVSALIIMIFFTLYTSSGMVS, GLFLTTAVVVLYTLFGGFLAV, AIMFAALVLVPIVAFTHVGGV, LLDIFKGASVISIISYLAWGL, IGMSWMIITVLGSVLTGLIGV, ILFHPLITGFLLSAILAAIMS, LVMIGRLSVLVIAVIAVLLSL, LVGYAWAGFGSAFGPAILLSL, ALAAMIVGAATVLIWITTGLA, and VYEIIPGFILSMIAGIIVSMI.

This sequence belongs to the sodium:solute symporter (SSF) (TC 2.A.21) family.

The protein resides in the cell membrane. The enzyme catalyses L-proline(in) + Na(+)(in) = L-proline(out) + Na(+)(out). In terms of biological role, catalyzes the uptake of extracellular proline under high-osmolarity growth conditions. Essential for the use of proline present in the environment as an osmoprotectant. This is Osmoregulated proline transporter OpuE from Bacillus subtilis (strain 168).